The chain runs to 147 residues: Lysozyme C-3 (147 aa).

The N-terminal stretch at 1–18 is a signal peptide; it reads MKALVILGLLFLSVAVQG. The 129-residue stretch at 19–147 folds into the C-type lysozyme domain; that stretch reads KVFERCELAR…VSSYVEGCKL (129 aa). Cystine bridges form between Cys24-Cys145, Cys48-Cys133, Cys83-Cys99, and Cys95-Cys113. Catalysis depends on residues Glu53 and Asp71.

Belongs to the glycosyl hydrolase 22 family. As to quaternary structure, monomer. Expressed in stomach.

It is found in the secreted. It carries out the reaction Hydrolysis of (1-&gt;4)-beta-linkages between N-acetylmuramic acid and N-acetyl-D-glucosamine residues in a peptidoglycan and between N-acetyl-D-glucosamine residues in chitodextrins.. Its function is as follows. Lysozymes have primarily a bacteriolytic function; those in tissues and body fluids are associated with the monocyte-macrophage system and enhance the activity of immunoagents. The protein is Lysozyme C-3 of Ovis aries (Sheep).